The following is a 625-amino-acid chain: TRAF3-interacting protein 1 (625 aa).

Positions 1 to 322 are abolishes microtubules binding when missing; it reads MNAAVVRRTQ…RKLSDGSFKD (322 aa). Residues 130-439 are disordered; sequence AGDKGDSRGR…DSQNSDNEDD (310 aa). Over residues 141-152 the composition is skewed to polar residues; that stretch reads QRTSKAQEPNNK. Basic and acidic residues predominate over residues 153-327; the sequence is SGKEEESRIH…GSFKDVKAEM (175 aa). Residues 229–625 form a DISC1-interaction domain region; sequence RAKDRDRNNR…VHSINLSSRR (397 aa). A phosphoserine mark is found at serine 316 and serine 409. Residues 420–434 are compositionally biased toward polar residues; it reads SGKTVSSVIIDSQNS. Residues 472 to 600 adopt a coiled-coil conformation; it reads GLVKKILETK…IRDQQDKICA (129 aa).

Belongs to the TRAF3IP1 family. As to quaternary structure, interacts with IL13RA1. Binds to microtubules, TRAF3 and DISC1. Component of the IFT complex B, at least composed of IFT20, IFT22, IFT25, IFT27, IFT46, IFT52, TRAF3IP1/IFT54, IFT57, IFT74, IFT80, IFT81, and IFT88. Interacts with IFT88. Interacts with MAP4.

Its subcellular location is the cytoplasm. The protein localises to the cytoskeleton. The protein resides in the cell projection. It localises to the cilium. It is found in the cilium axoneme. Its subcellular location is the cilium basal body. Its function is as follows. Plays an inhibitory role on IL13 signaling by binding to IL13RA1. Involved in suppression of IL13-induced STAT6 phosphorylation, transcriptional activity and DNA-binding. Recruits TRAF3 and DISC1 to the microtubules. Involved in epithelial morphogenesis and in the regulation of microtubule cytoskeleton organization. Is a negative regulator of microtubule stability, acting through the control of MAP4 levels. Involved in ciliogenesis. In Mus musculus (Mouse), this protein is TRAF3-interacting protein 1 (Traf3ip1).